Consider the following 596-residue polypeptide: UDP-glucuronate:xylan alpha-glucuronosyltransferase 2 (596 aa).

Residues 17 to 37 form a helical; Signal-anchor for type II membrane protein membrane-spanning segment; it reads LIRFNLVLLGFSFLLYTAIFF. Residues Asp395 and Asp397 each contribute to the Mn(2+) site. Substrate-binding positions include 395–397, 424–426, 451–455, and 504–509; these read DAD, NSG, NGGDQ, and HYLGWK. Position 504 (His504) interacts with Mn(2+).

The protein belongs to the glycosyltransferase 8 family. Glycogenin subfamily. The cofactor is Mn(2+).

Its subcellular location is the golgi apparatus membrane. Functionally, glycosyltransferase required for the addition of both glucuronic acid and 4-O-methylglucuronic acid branches to xylan in stem cell walls. In association with GUX1, is responsible for almost all of the substitutions of the xylan backbone in stem glucuronoxylan. This Arabidopsis thaliana (Mouse-ear cress) protein is UDP-glucuronate:xylan alpha-glucuronosyltransferase 2 (GUX2).